A 56-amino-acid polypeptide reads, in one-letter code: Large ribosomal subunit protein bL32 (56 aa).

Residues 1-37 form a disordered region; it reads MAVQQNKKSRSRRDMRRSHDALTTAAISVDKASGEKH. A compositionally biased stretch (basic residues) spans 7–16; the sequence is KKSRSRRDMR.

This sequence belongs to the bacterial ribosomal protein bL32 family.

The protein is Large ribosomal subunit protein bL32 (rpmF) of Pasteurella multocida (strain Pm70).